The sequence spans 269 residues: Phosphatidylglycerol--prolipoprotein diacylglyceryl transferase (269 aa).

7 helical membrane passes run 10–30 (IAVS…LIGF), 56–76 (AIFY…ILFY), 91–111 (IWEG…AMFF), 126–146 (FLAP…FIGG), 172–192 (PSQL…LWFF), 200–220 (YCVS…VEFV), and 237–257 (EGQL…MAGL). R139 serves as a coordination point for a 1,2-diacyl-sn-glycero-3-phospho-(1'-sn-glycerol).

Belongs to the Lgt family.

It localises to the cell inner membrane. It carries out the reaction L-cysteinyl-[prolipoprotein] + a 1,2-diacyl-sn-glycero-3-phospho-(1'-sn-glycerol) = an S-1,2-diacyl-sn-glyceryl-L-cysteinyl-[prolipoprotein] + sn-glycerol 1-phosphate + H(+). Its pathway is protein modification; lipoprotein biosynthesis (diacylglyceryl transfer). Its function is as follows. Catalyzes the transfer of the diacylglyceryl group from phosphatidylglycerol to the sulfhydryl group of the N-terminal cysteine of a prolipoprotein, the first step in the formation of mature lipoproteins. In Marinomonas sp. (strain MWYL1), this protein is Phosphatidylglycerol--prolipoprotein diacylglyceryl transferase.